The primary structure comprises 432 residues: FLYWCH-type zinc finger-containing protein peb-1 (432 aa).

Residues 1 to 33 (MLGLEKPLSSDISSSSTDTSAISPISVSSMPLS) are disordered. Residues 9 to 26 (SSDISSSSTDTSAISPIS) show a composition bias toward low complexity. The required for DNA-binding DNA-binding region spans 30–188 (MPLSPDKEKK…RNKEGKPRKP (159 aa)). Residues 53–120 (IVTSFKGYQK…NACTKNTHNH (68 aa)) form an FLYWCH-type zinc finger. The tract at residues 174–195 (SLVSARNKEGKPRKPKSKTSTN) is disordered.

The protein resides in the nucleus. Functionally, putative transcription factor. Binds to specific sequence motif 5'-[TC][AGT]TGCC[GA][AT]-3' in regulatory elements of target genes such as myosin myo-2. May modulate gene expression, perhaps acting in opposition to transcription factor pha-4. Involved in morphogenesis, perhaps especially in formation of the pharynx. Plays roles in molting, feeding and morphology. In Caenorhabditis briggsae, this protein is FLYWCH-type zinc finger-containing protein peb-1.